A 258-amino-acid chain; its full sequence is Ubiquinone/menaquinone biosynthesis C-methyltransferase UbiE (258 aa).

The segment at 1–21 is disordered; it reads MPESRTSADGGMETSYGFREV. S-adenosyl-L-methionine is bound by residues Thr81, Asp102, and 130–131; that span reads NA.

This sequence belongs to the class I-like SAM-binding methyltransferase superfamily. MenG/UbiE family.

It catalyses the reaction a 2-demethylmenaquinol + S-adenosyl-L-methionine = a menaquinol + S-adenosyl-L-homocysteine + H(+). The catalysed reaction is a 2-methoxy-6-(all-trans-polyprenyl)benzene-1,4-diol + S-adenosyl-L-methionine = a 5-methoxy-2-methyl-3-(all-trans-polyprenyl)benzene-1,4-diol + S-adenosyl-L-homocysteine + H(+). It participates in quinol/quinone metabolism; menaquinone biosynthesis; menaquinol from 1,4-dihydroxy-2-naphthoate: step 2/2. The protein operates within cofactor biosynthesis; ubiquinone biosynthesis. Methyltransferase required for the conversion of demethylmenaquinol (DMKH2) to menaquinol (MKH2) and the conversion of 2-polyprenyl-6-methoxy-1,4-benzoquinol (DDMQH2) to 2-polyprenyl-3-methyl-6-methoxy-1,4-benzoquinol (DMQH2). This Rhizobium leguminosarum bv. trifolii (strain WSM2304) protein is Ubiquinone/menaquinone biosynthesis C-methyltransferase UbiE.